A 636-amino-acid chain; its full sequence is Signal recognition particle receptor subunit alpha (636 aa).

Disordered stretches follow at residues 132–205 (APTT…ELSK), 217–246 (IQKH…APRV), and 280–314 (IRGT…TKGT). Composition is skewed to basic and acidic residues over residues 137-146 (KKFEDSEKAK) and 153-165 (IETR…EKAK). The residue at position 177 (S177) is a Phosphoserine. Positions 217–238 (IQKHGKGLDKSSKSTKSDTPKE) are enriched in basic and acidic residues. T283 carries the post-translational modification Phosphothreonine. S295, S296, and S297 each carry phosphoserine. A compositionally biased stretch (polar residues) spans 302 to 312 (ATQNTKPSATK). T303 bears the Phosphothreonine mark. Positions 417–634 (YVVTFCGVNG…NAKAVVAALM (218 aa)) are NG domain. GTP contacts are provided by residues 423–430 (GVNGVGKS) and 518–522 (DTAGR). T576 is modified (phosphothreonine). A GTP-binding site is contributed by 586 to 589 (TKFD).

Belongs to the GTP-binding SRP family. As to quaternary structure, heterodimer with SRPRB. Interacts with the signal recognition particle (SRP) complex subunit SRP54.

It localises to the endoplasmic reticulum membrane. In terms of biological role, component of the SRP (signal recognition particle) receptor. Ensures, in conjunction with the signal recognition particle, the correct targeting of the nascent secretory proteins to the endoplasmic reticulum membrane system. Forms a guanosine 5'-triphosphate (GTP)-dependent complex with the SRP subunit SRP54. SRP receptor compaction and GTPase rearrangement drive SRP-mediated cotranslational protein translocation into the ER. This is Signal recognition particle receptor subunit alpha from Mus musculus (Mouse).